Consider the following 417-residue polypeptide: Type II methyltransferase M.KpnI (417 aa).

This sequence belongs to the N(4)/N(6)-methyltransferase family.

The catalysed reaction is a 2'-deoxyadenosine in DNA + S-adenosyl-L-methionine = an N(6)-methyl-2'-deoxyadenosine in DNA + S-adenosyl-L-homocysteine + H(+). A beta subtype methylase, recognizes the double-stranded sequence 5'-GGTACC-3', methylates A-4 on both strands, and protects the DNA from cleavage by the KpnI endonuclease. The chain is Type II methyltransferase M.KpnI from Klebsiella pneumoniae.